Reading from the N-terminus, the 181-residue chain is Large ribosomal subunit protein uL6 (181 aa).

It belongs to the universal ribosomal protein uL6 family. In terms of assembly, part of the 50S ribosomal subunit.

In terms of biological role, this protein binds to the 23S rRNA, and is important in its secondary structure. It is located near the subunit interface in the base of the L7/L12 stalk, and near the tRNA binding site of the peptidyltransferase center. This is Large ribosomal subunit protein uL6 from Ruthia magnifica subsp. Calyptogena magnifica.